The sequence spans 216 residues: MPKFFCDYCDVYLTHDSMSVRKAHNAGRNHLRNVVEYYQQIGQEKAQSVIDSITSSYAAEGQAVPNPAMAPPGAFPPPFGFPGRPGQLPPPPFGIPPPGGPNGAPPGMPIPPPGGRGLPFPPPFPPAPGGAPGGLPPPPLGNMPPGQGFPPVPPPGGFPPNFQIPPPGAGGFPPVPPPGQPGFSPSPGPGMSGPPAPPGTGSSSLPGPPPGLSEKR.

The Matrin-type zinc-finger motif lies at 4 to 36 (FFCDYCDVYLTHDSMSVRKAHNAGRNHLRNVVE). Pro residues-rich tracts occupy residues 68–80 (AMAP…PPFG), 87–198 (QLPP…PAPP), and 206–216 (PGPPPGLSEKR). The interval 68–216 (AMAPPGAFPP…GPPPGLSEKR (149 aa)) is disordered.

It belongs to the U1 small nuclear ribonucleoprotein C family. As to quaternary structure, U1 snRNP is composed of the 7 core Sm proteins B/B', D1, D2, D3, E, F and G that assemble in a heptameric protein ring on the Sm site of the small nuclear RNA to form the core snRNP, and at least 3 U1 snRNP-specific proteins U1-70K, U1-A and U1-C. U1-C interacts with U1 snRNA and the 5' splice-site region of the pre-mRNA.

Its subcellular location is the nucleus. Its function is as follows. Component of the spliceosomal U1 snRNP, which is essential for recognition of the pre-mRNA 5' splice-site and the subsequent assembly of the spliceosome. U1-C is directly involved in initial 5' splice-site recognition for both constitutive and regulated alternative splicing. The interaction with the 5' splice-site seems to precede base-pairing between the pre-mRNA and the U1 snRNA. Stimulates commitment or early (E) complex formation by stabilizing the base pairing of the 5' end of the U1 snRNA and the 5' splice-site region. The chain is U1 small nuclear ribonucleoprotein C from Aspergillus fumigatus (strain ATCC MYA-4609 / CBS 101355 / FGSC A1100 / Af293) (Neosartorya fumigata).